A 556-amino-acid polypeptide reads, in one-letter code: Membrane protein insertase YidC (556 aa).

5 helical membrane-spanning segments follow: residues 6 to 26 (IVLYMALALIGLSLWNAWQID), 332 to 352 (LDLTVDYGILWFLSSLLFSLM), 358 to 378 (VVGNWGWSIVLVTVLIKLAFY), 428 to 448 (LGGCLPILIQIPVFIALYWVL), and 501 to 521 (VMMFLPILFTGLFWNFPSGLV).

This sequence belongs to the OXA1/ALB3/YidC family. Type 1 subfamily. In terms of assembly, interacts with the Sec translocase complex via SecD. Specifically interacts with transmembrane segments of nascent integral membrane proteins during membrane integration.

It is found in the cell inner membrane. In terms of biological role, required for the insertion and/or proper folding and/or complex formation of integral membrane proteins into the membrane. Involved in integration of membrane proteins that insert both dependently and independently of the Sec translocase complex, as well as at least some lipoproteins. Aids folding of multispanning membrane proteins. This chain is Membrane protein insertase YidC, found in Legionella pneumophila (strain Corby).